Reading from the N-terminus, the 181-residue chain is MGLYVSRLFNRLFQKKDVRILMVGLDAAGKTTILYKVKLGEVVTTIPTIGFNVETVEFRNISFTVWDVGGQDKIRPLWRHYYSNTDGLIFVVDSNDRERIDDAREELHRMINEEELKDAIILVFANKQDLPNAMSAAEVTEKLHLNTIRERNWFIQSTCATRGDGLYEGFDWLTTHLNNAK.

Glycine 2 carries the N-myristoyl glycine lipid modification. Positions 3 to 16 (LYVSRLFNRLFQKK) are important for the stable binding to the membranes. GTP-binding positions include 27-32 (AAGKTT), 126-129 (NKQD), and alanine 160.

The protein belongs to the small GTPase superfamily. Arf family. May interact with GTPase RAB5b.

Its subcellular location is the golgi apparatus membrane. It catalyses the reaction GTP + H2O = GDP + phosphate + H(+). Alternates between an inactive GDP-bound form and an active GTP-bound form. Intrinsic GTPase activity is almost undetectable in vitro. Activated by a guanine nucleotide-exchange factor (GEF) and inactivated by GTPase-activating protein ARFGAP1. Functionally, small GTPase involved in protein trafficking between different compartments. Modulates vesicle budding and uncoating within the Golgi complex. In its GTP-bound form, triggers the recruitment of coatomer proteins to the Golgi membrane. The hydrolysis of ARF1-bound GTP, which is mediated by ARFGAPs proteins, is required for dissociation of coat proteins from Golgi membranes and vesicles. Regulates the transport of N-acylated AK2 to the parasitophorous vacuole membrane. May be involved in the activation of lipid kinase PIP5K. This chain is ADP-ribosylation factor 1, found in Plasmodium falciparum (isolate 3D7).